The chain runs to 694 residues: Elongation factor G (694 aa).

The region spanning 8-287 is the tr-type G domain; sequence EDYRNFGIMA…AVVEFLPAPT (280 aa). Residues 17 to 24, 86 to 90, and 140 to 143 each bind GTP; these read AHIDAGKT, DTPGH, and NKMD.

This sequence belongs to the TRAFAC class translation factor GTPase superfamily. Classic translation factor GTPase family. EF-G/EF-2 subfamily.

Its subcellular location is the cytoplasm. In terms of biological role, catalyzes the GTP-dependent ribosomal translocation step during translation elongation. During this step, the ribosome changes from the pre-translocational (PRE) to the post-translocational (POST) state as the newly formed A-site-bound peptidyl-tRNA and P-site-bound deacylated tRNA move to the P and E sites, respectively. Catalyzes the coordinated movement of the two tRNA molecules, the mRNA and conformational changes in the ribosome. This is Elongation factor G from Brucella melitensis biotype 1 (strain ATCC 23456 / CCUG 17765 / NCTC 10094 / 16M).